The sequence spans 502 residues: 9-beta-pimara-7,15-diene oxidase (502 aa).

Helical transmembrane passes span 4–26 (INSE…ALLT) and 106–128 (LLVS…GAYW). Heme is bound at residue C438.

The protein belongs to the cytochrome P450 family. Requires heme as cofactor.

It is found in the membrane. The enzyme catalyses 9beta-pimara-7,15-diene + 3 reduced [NADPH--hemoprotein reductase] + 3 O2 = 9beta-pimara-7,15-dien-19-oate + 3 oxidized [NADPH--hemoprotein reductase] + 4 H2O + 4 H(+). Its function is as follows. Involved in momilactone phytoalexins biosynthesis; acts as a multifunctional diterpene oxidase. Participates in the biosynthetic steps between 9-beta-pimara-7,15-diene and 3-beta-hydroxy-9-beta-pimara-7,15-dien-19,6-beta-olide. Also catalyzes consecutive oxidations at C19 of syn-stemod-13(17)-ene. This Oryza sativa subsp. japonica (Rice) protein is 9-beta-pimara-7,15-diene oxidase (CYP99A3).